A 656-amino-acid polypeptide reads, in one-letter code: Putative cysteine-rich receptor-like protein kinase 32 (656 aa).

Positions 1–23 are cleaved as a signal peptide; it reads MCLQNLLSILCFVLAISFGYVSA. Gnk2-homologous domains are found at residues 24-126 and 134-238; these read QKCV…NSSF and PTMV…GSEY. Topologically, residues 24-262 are extracellular; that stretch reads QKCVDSMFFR…PDGKTISTGA (239 aa). Residues Asn35, Asn52, Asn61, Asn103, and Asn123 are each glycosylated (N-linked (GlcNAc...) asparagine). Residues 263–283 traverse the membrane as a helical segment; sequence IVAVVVSVVIFVVLLALVLVI. Residues 284 to 656 are Cytoplasmic-facing; that stretch reads RKRRQSYKTL…SASITRVTPR (373 aa). The Protein kinase domain maps to 321 to 606; the sequence is FSRNNKLGKG…IFQMLTNSSI (286 aa). Residues 327-335 and Lys349 each bind ATP; that span reads LGKGGFGEV. The residue at position 394 (Tyr394) is a Phosphotyrosine. Asp454 serves as the catalytic Proton acceptor. Position 458 is a phosphoserine (Ser458). The residue at position 494 (Thr494) is a Phosphothreonine. Tyr502 bears the Phosphotyrosine mark.

It belongs to the protein kinase superfamily. Ser/Thr protein kinase family. CRK subfamily.

The protein localises to the membrane. The enzyme catalyses L-seryl-[protein] + ATP = O-phospho-L-seryl-[protein] + ADP + H(+). It catalyses the reaction L-threonyl-[protein] + ATP = O-phospho-L-threonyl-[protein] + ADP + H(+). The chain is Putative cysteine-rich receptor-like protein kinase 32 (CRK32) from Arabidopsis thaliana (Mouse-ear cress).